A 263-amino-acid polypeptide reads, in one-letter code: 5'-nucleotidase SurE (263 aa).

4 residues coordinate a divalent metal cation: Asp8, Asp9, Ser40, and Asn93.

It belongs to the SurE nucleotidase family. It depends on a divalent metal cation as a cofactor.

It localises to the cytoplasm. The enzyme catalyses a ribonucleoside 5'-phosphate + H2O = a ribonucleoside + phosphate. Nucleotidase that shows phosphatase activity on nucleoside 5'-monophosphates. This chain is 5'-nucleotidase SurE, found in Beijerinckia indica subsp. indica (strain ATCC 9039 / DSM 1715 / NCIMB 8712).